Reading from the N-terminus, the 388-residue chain is Quinolone resistance protein NorA (388 aa).

12 helical membrane passes run 5 to 25 (IFVL…VIPV), 42 to 62 (LLVA…GTLA), 69 to 89 (LIIC…AVGH), 99 to 119 (VIGG…IADI), 129 to 149 (FGYM…IGGF), 157 to 177 (MPFY…IVLI), 201 to 221 (WKVF…LSAF), 239 to 259 (DISI…IYFF), 269 to 289 (LTFI…LVFA), 293 to 313 (WSIM…RPAI), 331 to 351 (LNST…GALF), and 355 to 375 (IEAP…IVLI).

The protein belongs to the major facilitator superfamily. TCR/Tet family.

The protein localises to the cell membrane. Functionally, involved in quinolone resistance. May constitute a membrane-associated active efflux pump of hydrophilic quinolones. This chain is Quinolone resistance protein NorA (norA), found in Staphylococcus aureus (strain COL).